A 343-amino-acid polypeptide reads, in one-letter code: HTH-type transcriptional regulator GntR (343 aa).

One can recognise an HTH lacI-type domain in the interval 16–70 (PTLNEVARRAGVSPITASRALRGVASVAEELAQKVRDAARELGYVANPAARALAS). The H-T-H motif DNA-binding region spans 18-37 (LNEVARRAGVSPITASRALR).

Its activity is regulated as follows. Free GntR fails to recognize gluconate and 6-phosphogluconate, whereas the GntR/DNA complexes recognize both ligands. It is therefore likely that GntR DNA binding induces structural changes that permit GntR to recognize effectors. Involved in the regulation of glucose metabolism. Represses its own expression as well as that of the gluconate permease GntP. It employs an effector mediated de-repression mechanism: in the absence of ligand, GntR binds to the gntR and gntP promoters and represses their expression. The release of promoter bound GntR is induced by gluconate and 6-phosphogluconate that bind with similar apparent affinities to the GntR/DNA complex. The release of GntR leads to transcription of the genes. The chain is HTH-type transcriptional regulator GntR from Pseudomonas aeruginosa (strain ATCC 15692 / DSM 22644 / CIP 104116 / JCM 14847 / LMG 12228 / 1C / PRS 101 / PAO1).